Consider the following 596-residue polypeptide: Aspartate--tRNA(Asp/Asn) ligase (596 aa).

Glutamate 175 serves as a coordination point for L-aspartate. Residues 199–202 (QMFK) form an aspartate region. L-aspartate is bound by residues arginine 221 and histidine 451. 221 to 223 (RDE) is an ATP binding site. Glutamate 485 is an ATP binding site. Arginine 492 is a binding site for L-aspartate. 537–540 (GVDR) provides a ligand contact to ATP.

The protein belongs to the class-II aminoacyl-tRNA synthetase family. Type 1 subfamily. Homodimer.

It is found in the cytoplasm. It catalyses the reaction tRNA(Asx) + L-aspartate + ATP = L-aspartyl-tRNA(Asx) + AMP + diphosphate. Functionally, aspartyl-tRNA synthetase with relaxed tRNA specificity since it is able to aspartylate not only its cognate tRNA(Asp) but also tRNA(Asn). Reaction proceeds in two steps: L-aspartate is first activated by ATP to form Asp-AMP and then transferred to the acceptor end of tRNA(Asp/Asn). This Zymomonas mobilis subsp. mobilis (strain ATCC 31821 / ZM4 / CP4) protein is Aspartate--tRNA(Asp/Asn) ligase.